The sequence spans 275 residues: NH(3)-dependent NAD(+) synthetase (275 aa).

Position 46–53 (46–53) interacts with ATP; the sequence is GISGGQDS. Asp-52 provides a ligand contact to Mg(2+). Residue Arg-140 coordinates deamido-NAD(+). An ATP-binding site is contributed by Thr-160. Glu-165 is a Mg(2+) binding site. Deamido-NAD(+) contacts are provided by Lys-173 and Asp-180. ATP-binding residues include Lys-189 and Thr-211. 260 to 261 is a deamido-NAD(+) binding site; the sequence is HK.

The protein belongs to the NAD synthetase family. Homodimer.

The enzyme catalyses deamido-NAD(+) + NH4(+) + ATP = AMP + diphosphate + NAD(+) + H(+). Its pathway is cofactor biosynthesis; NAD(+) biosynthesis; NAD(+) from deamido-NAD(+) (ammonia route): step 1/1. In terms of biological role, catalyzes the ATP-dependent amidation of deamido-NAD to form NAD. Uses ammonia as a nitrogen source. This Erwinia tasmaniensis (strain DSM 17950 / CFBP 7177 / CIP 109463 / NCPPB 4357 / Et1/99) protein is NH(3)-dependent NAD(+) synthetase.